The sequence spans 119 residues: cAMP-responsive element-binding protein-like 2 (119 aa).

The tract at residues 1–23 is disordered; it reads MDDSKIVAGKVKKPGKRGRKPAK. The segment covering 10–21 has biased composition (basic residues); sequence KVKKPGKRGRKP. Residues 23 to 86 enclose the bZIP domain; sequence KIDLKAKLER…LAMDQGKIPS (64 aa). Residues 29 to 60 form a basic motif region; sequence KLERSRQSARECRARKKLRYQYLEELVSSKER. The segment at 62-69 is leucine-zipper; sequence ICALREEL. Residues 95–119 are disordered; sequence DEQKTPQSCSNKTTKNSKYSSSSGI. The segment covering 102-119 has biased composition (low complexity); the sequence is SCSNKTTKNSKYSSSSGI.

It belongs to the bZIP family. ATF subfamily.

The protein localises to the nucleus. Probable regulator of creb1 transcriptional activity which is involved in adipose cells differentiation. May also play a regulatory role in the cell cycle. The polypeptide is cAMP-responsive element-binding protein-like 2 (crebl2) (Danio rerio (Zebrafish)).